Reading from the N-terminus, the 245-residue chain is Aquaporin SIP1-1 (245 aa).

Transmembrane regions (helical) follow at residues 14-34 (AVVTFLWVLCASALGASTAAV) and 55-75 (LLSVLLFTFDLLCGALGGASF). Residues 76–78 (NPT) carry the NPA 1 motif. 3 consecutive transmembrane segments (helical) span residues 100-120 (FPAQAAGAVGGALAISELMPA), 138-158 (GALAEGVLTFVITLTVLWVIV), and 164-184 (VILKTLLLSTSIVSVILAGAE). Residues 191-193 (NPA) carry the NPA 2 motif. The chain crosses the membrane as a helical span at residues 213–233 (VYWICPFIGAMLAGWIFRVVF).

This sequence belongs to the MIP/aquaporin (TC 1.A.8) family. SIP (TC 1.A.8.10) subfamily.

The protein localises to the membrane. Its function is as follows. Aquaporins facilitate the transport of water and small neutral solutes across cell membranes. In Zea mays (Maize), this protein is Aquaporin SIP1-1 (SIP1-1).